Here is a 362-residue protein sequence, read N- to C-terminus: Notoamide biosynthesis cluster protein J' (362 aa).

Residues 1-22 form the signal peptide; sequence MRNMATMLHLLTLILLTSPAST. N-linked (GlcNAc...) asparagine glycosylation is found at N157, N190, N280, and N338.

In terms of biological role, part of the gene cluster that mediates the biosynthesis of notoamide, a fungal indole alkaloid that belongs to a family of natural products containing a characteristic bicyclo[2.2.2]diazaoctane core. The first step of notoamide biosynthesis involves coupling of L-proline and L-tryptophan by the bimodular NRPS notE', to produce cyclo-L-tryptophan-L-proline called brevianamide F. The reverse prenyltransferase notF' then acts as a deoxybrevianamide E synthase and converts brevianamide F to deoxybrevianamide E via reverse prenylation at C-2 of the indole ring leading to the bicyclo[2.2.2]diazaoctane core. Deoxybrevianamide E is further hydroxylated at C-6 of the indole ring, likely catalyzed by the cytochrome P450 monooxygenase notG', to yield 6-hydroxy-deoxybrevianamide E. 6-hydroxy-deoxybrevianamide E is a specific substrate of the prenyltransferase notC' for normal prenylation at C-7 to produce 6-hydroxy-7-prenyl-deoxybrevianamide, also called notoamide S. As the proposed pivotal branching point in notoamide biosynthesis, notoamide S can be diverted to notoamide E through an oxidative pyran ring closure putatively catalyzed by either notH' cytochrome P450 monooxygenase or the notD' FAD-linked oxidoreductase. This step would be followed by an indole 2,3-epoxidation-initiated pinacol-like rearrangement catalyzed by the notB' FAD-dependent monooxygenase leading to the formation of notoamide C and notoamide D. On the other hand notoamide S is converted to notoamide T by notH' (or notD'), a bifunctional oxidase that also functions as the intramolecular Diels-Alderase responsible for generation of (-)-notoamide T. To generate antipodal (+)-notoaminide T, notH (or notD) in Aspergillus strain MF297-2 is expected to catalyze a Diels-Alder reaction leading to the opposite stereochemistry. The remaining oxidoreductase notD' (or notH') likely catalyzes the oxidative pyran ring formation to yield (-)-stephacidin A. The FAD-dependent monooxygenase notI' is highly similar to notB' and is predicted to catalyze a similar conversion from (-)-stephacidin A to (+)-notoamide B via the 2,3-epoxidation of (-)-stephacidin A followed by a pinacol-type rearrangement. Finally, it remains unclear which enzyme could be responsible for the final hydroxylation steps leading to notoamide A and sclerotiamide. The function of notJ' in the notoamide biosynthesis has not been determined yet. This chain is Notoamide biosynthesis cluster protein J', found in Aspergillus versicolor.